The sequence spans 380 residues: Queuine tRNA-ribosyltransferase (380 aa).

Asp-95 acts as the Proton acceptor in catalysis. Residues 95-99, Asp-149, Gln-192, and Gly-219 contribute to the substrate site; that span reads DSGGF. The segment at 250–256 is RNA binding; that stretch reads GVGSPDA. Asp-269 functions as the Nucleophile in the catalytic mechanism. Residues 274-278 are RNA binding; important for wobble base 34 recognition; it reads TRIAR. Zn(2+) contacts are provided by Cys-307, Cys-309, Cys-312, and His-338.

It belongs to the queuine tRNA-ribosyltransferase family. Homodimer. Within each dimer, one monomer is responsible for RNA recognition and catalysis, while the other monomer binds to the replacement base PreQ1. Requires Zn(2+) as cofactor.

It carries out the reaction 7-aminomethyl-7-carbaguanine + guanosine(34) in tRNA = 7-aminomethyl-7-carbaguanosine(34) in tRNA + guanine. Its pathway is tRNA modification; tRNA-queuosine biosynthesis. Its function is as follows. Catalyzes the base-exchange of a guanine (G) residue with the queuine precursor 7-aminomethyl-7-deazaguanine (PreQ1) at position 34 (anticodon wobble position) in tRNAs with GU(N) anticodons (tRNA-Asp, -Asn, -His and -Tyr). Catalysis occurs through a double-displacement mechanism. The nucleophile active site attacks the C1' of nucleotide 34 to detach the guanine base from the RNA, forming a covalent enzyme-RNA intermediate. The proton acceptor active site deprotonates the incoming PreQ1, allowing a nucleophilic attack on the C1' of the ribose to form the product. After dissociation, two additional enzymatic reactions on the tRNA convert PreQ1 to queuine (Q), resulting in the hypermodified nucleoside queuosine (7-(((4,5-cis-dihydroxy-2-cyclopenten-1-yl)amino)methyl)-7-deazaguanosine). The polypeptide is Queuine tRNA-ribosyltransferase (Pediococcus pentosaceus (strain ATCC 25745 / CCUG 21536 / LMG 10740 / 183-1w)).